Here is a 360-residue protein sequence, read N- to C-terminus: Probable dual-specificity RNA methyltransferase RlmN (360 aa).

E91 functions as the Proton acceptor in the catalytic mechanism. A Radical SAM core domain is found at 97–335 (QHYGQSVCVT…CVVRQEHGTD (239 aa)). Residues C104 and C340 are joined by a disulfide bond. Residues C111, C115, and C118 each contribute to the [4Fe-4S] cluster site. Residues 163–164 (GE), S195, 218–220 (SLH), and N296 each bind S-adenosyl-L-methionine. The active-site S-methylcysteine intermediate is the C340.

Belongs to the radical SAM superfamily. RlmN family. It depends on [4Fe-4S] cluster as a cofactor.

The protein resides in the cytoplasm. It carries out the reaction adenosine(2503) in 23S rRNA + 2 reduced [2Fe-2S]-[ferredoxin] + 2 S-adenosyl-L-methionine = 2-methyladenosine(2503) in 23S rRNA + 5'-deoxyadenosine + L-methionine + 2 oxidized [2Fe-2S]-[ferredoxin] + S-adenosyl-L-homocysteine. It catalyses the reaction adenosine(37) in tRNA + 2 reduced [2Fe-2S]-[ferredoxin] + 2 S-adenosyl-L-methionine = 2-methyladenosine(37) in tRNA + 5'-deoxyadenosine + L-methionine + 2 oxidized [2Fe-2S]-[ferredoxin] + S-adenosyl-L-homocysteine. Its function is as follows. Specifically methylates position 2 of adenine 2503 in 23S rRNA and position 2 of adenine 37 in tRNAs. The sequence is that of Probable dual-specificity RNA methyltransferase RlmN from Streptococcus equi subsp. zooepidemicus (strain H70).